The chain runs to 450 residues: tRNA-2-methylthio-N(6)-dimethylallyladenosine synthase (450 aa).

Residues 8–128 (KRLYIKTYGC…LPELIARAHR (121 aa)) enclose the MTTase N-terminal domain. The [4Fe-4S] cluster site is built by Cys-17, Cys-53, Cys-91, Cys-166, Cys-170, and Cys-173. Positions 152 to 382 (RPTGVTAFLT…QALLEQQQLA (231 aa)) constitute a Radical SAM core domain. Residues 385–447 (AAQAGRVLPV…RNSLAGVLEL (63 aa)) enclose the TRAM domain.

It belongs to the methylthiotransferase family. MiaB subfamily. Monomer. [4Fe-4S] cluster serves as cofactor.

It is found in the cytoplasm. The enzyme catalyses N(6)-dimethylallyladenosine(37) in tRNA + (sulfur carrier)-SH + AH2 + 2 S-adenosyl-L-methionine = 2-methylsulfanyl-N(6)-dimethylallyladenosine(37) in tRNA + (sulfur carrier)-H + 5'-deoxyadenosine + L-methionine + A + S-adenosyl-L-homocysteine + 2 H(+). Catalyzes the methylthiolation of N6-(dimethylallyl)adenosine (i(6)A), leading to the formation of 2-methylthio-N6-(dimethylallyl)adenosine (ms(2)i(6)A) at position 37 in tRNAs that read codons beginning with uridine. The chain is tRNA-2-methylthio-N(6)-dimethylallyladenosine synthase from Phenylobacterium zucineum (strain HLK1).